Consider the following 410-residue polypeptide: Arginine deiminase (410 aa).

Cys399 (amidino-cysteine intermediate) is an active-site residue.

The protein belongs to the arginine deiminase family.

The protein resides in the cytoplasm. It catalyses the reaction L-arginine + H2O = L-citrulline + NH4(+). The protein operates within amino-acid degradation; L-arginine degradation via ADI pathway; carbamoyl phosphate from L-arginine: step 1/2. This Listeria monocytogenes serovar 1/2a (strain ATCC BAA-679 / EGD-e) protein is Arginine deiminase.